We begin with the raw amino-acid sequence, 179 residues long: Orotate phosphoribosyltransferase (179 aa).

5-phospho-alpha-D-ribose 1-diphosphate is bound by residues R94, K95, K98, H100, and 120-128 (EDTSTTGNS). The orotate site is built by T124 and R152.

The protein belongs to the purine/pyrimidine phosphoribosyltransferase family. PyrE subfamily. In terms of assembly, homodimer. It depends on Mg(2+) as a cofactor.

The catalysed reaction is orotidine 5'-phosphate + diphosphate = orotate + 5-phospho-alpha-D-ribose 1-diphosphate. It participates in pyrimidine metabolism; UMP biosynthesis via de novo pathway; UMP from orotate: step 1/2. Its function is as follows. Catalyzes the transfer of a ribosyl phosphate group from 5-phosphoribose 1-diphosphate to orotate, leading to the formation of orotidine monophosphate (OMP). The chain is Orotate phosphoribosyltransferase from Mycobacterium avium (strain 104).